Here is a 366-residue protein sequence, read N- to C-terminus: 4-hydroxy-3-methylbut-2-en-1-yl diphosphate synthase (flavodoxin) (366 aa).

[4Fe-4S] cluster contacts are provided by C270, C273, C305, and E312.

Belongs to the IspG family. [4Fe-4S] cluster serves as cofactor.

The catalysed reaction is (2E)-4-hydroxy-3-methylbut-2-enyl diphosphate + oxidized [flavodoxin] + H2O + 2 H(+) = 2-C-methyl-D-erythritol 2,4-cyclic diphosphate + reduced [flavodoxin]. It functions in the pathway isoprenoid biosynthesis; isopentenyl diphosphate biosynthesis via DXP pathway; isopentenyl diphosphate from 1-deoxy-D-xylulose 5-phosphate: step 5/6. Converts 2C-methyl-D-erythritol 2,4-cyclodiphosphate (ME-2,4cPP) into 1-hydroxy-2-methyl-2-(E)-butenyl 4-diphosphate. In Wigglesworthia glossinidia brevipalpis, this protein is 4-hydroxy-3-methylbut-2-en-1-yl diphosphate synthase (flavodoxin).